We begin with the raw amino-acid sequence, 399 residues long: Beta sliding clamp (399 aa).

This sequence belongs to the beta sliding clamp family. In terms of assembly, forms a ring-shaped head-to-tail homodimer around DNA which binds and tethers DNA polymerases and other proteins to the DNA. The DNA replisome complex has a single clamp-loading complex (3 tau and 1 each of delta, delta', psi and chi subunits) which binds 3 Pol III cores (1 core on the leading strand and 2 on the lagging strand) each with a beta sliding clamp dimer. Additional proteins in the replisome are other copies of gamma, psi and chi, Ssb, DNA helicase and RNA primase.

Its subcellular location is the cytoplasm. Its function is as follows. Confers DNA tethering and processivity to DNA polymerases and other proteins. Acts as a clamp, forming a ring around DNA (a reaction catalyzed by the clamp-loading complex) which diffuses in an ATP-independent manner freely and bidirectionally along dsDNA. Initially characterized for its ability to contact the catalytic subunit of DNA polymerase III (Pol III), a complex, multichain enzyme responsible for most of the replicative synthesis in bacteria; Pol III exhibits 3'-5' exonuclease proofreading activity. The beta chain is required for initiation of replication as well as for processivity of DNA replication. In Mycolicibacterium paratuberculosis (strain ATCC BAA-968 / K-10) (Mycobacterium paratuberculosis), this protein is Beta sliding clamp (dnaN).